A 198-amino-acid polypeptide reads, in one-letter code: Probable GTP-binding protein EngB (198 aa).

In terms of domain architecture, EngB-type G spans 36 to 198 (SEPQFAFIGR…NLSKLQELLE (163 aa)). GTP is bound by residues 44 to 51 (GRSNVGKS), 70 to 74 (GRTQL), 88 to 91 (DLPG), 155 to 158 (NKID), and 182 to 184 (ISA). 2 residues coordinate Mg(2+): S51 and T72.

It belongs to the TRAFAC class TrmE-Era-EngA-EngB-Septin-like GTPase superfamily. EngB GTPase family. It depends on Mg(2+) as a cofactor.

Functionally, necessary for normal cell division and for the maintenance of normal septation. The sequence is that of Probable GTP-binding protein EngB from Mesomycoplasma hyopneumoniae (strain 232) (Mycoplasma hyopneumoniae).